The following is an 81-amino-acid chain: MDSYLTTPMPYHPVAVMQNLEEKMQYYLVKTYTSLGKLAYNYPVLTMLGLAMSYKLGPRKVLLTVLQGFMTLGIANWLSWE.

This is an uncharacterized protein from Homo sapiens (Human).